The sequence spans 426 residues: Metacaspase-1B (426 aa).

Positions 1-14 (MSGYPGAGYNGGGY) are enriched in gly residues. Positions 1–111 (MSGYPGAGYN…QAPPPPPQAP (111 aa)) are disordered. Residues 21–68 (QYGGYYPPQPAYNAYQQPPPQQQQYMVYHQPSPGPQQHQHWNPQQQTP) show a composition bias toward low complexity. Residues His217 and Cys273 contribute to the active site.

It belongs to the peptidase C14B family.

Involved in cell death (apoptosis). The protein is Metacaspase-1B (casB) of Neurospora crassa (strain ATCC 24698 / 74-OR23-1A / CBS 708.71 / DSM 1257 / FGSC 987).